The sequence spans 1897 residues: uncharacterized protein (1897 aa).

The region spanning Ser-1661 to Leu-1888 is the Peptidase S74 domain. The stretch at Ala-1865–Lys-1894 forms a coiled coil.

This is an uncharacterized protein from Micromonas pusilla (Picoplanktonic green alga).